Reading from the N-terminus, the 875-residue chain is MKDYNDNIHRPNPHNLYNNISLLCPPKMKGNSENLSTNNNPNLTGKNIKVSNRHDKMKDIHIHKLPDVENISSDMNPKSSKMFSFKNINHNKEENEIHLKDKYSFEKREDDMYNMSVSNMHKVPIHKQNIYSKNNYNTSVCLQQNKKETNNISYINNIHNTMCITNNKNDHSVEHKINIYNNKYNYNNTFLCNKKLCTQKIIQYIGKNQNTKHPLHSLYHTNVVGMNKFNSSNNLSDQINILNNNIQHINSTFNNLRQNNIYKNNDSIELFINNNLKSGDTNKYATFYKNVKISEKNNMYKQKEDKKQINNKNPYIFTCQKYFMRPSNVLHNIQNCGIHKKKKKKKKNHQIKHRSFHNIYKQINIINDQIDLINNKINKNSKDQNRAHILEISPLSLPSYIEYKNKNNNIFSSYFAHPNNKTHNFKKIKMIKKNISNPFNKEEPCGEKKNSPQVNDSKSFRYFDHSTCNNNYHNKEYMKKEQKSHLHSNHNINHEKGSDPSYNLNTKNTKNVTNTNDQTCIYEDHTFEKAVENNKVMYLKNKPIQSKLLKLNNQILNNTDQKKYEKCIDHGDTCNNKDEKNIKCTYKIDDILCSYNNGNNIKYEREVIKITNKYRNALEKWRYKFVHKNKTTKRNITSSNQKGKCNFNIFKINKHINKKKNKKIKKIESNKYGNMYNFVDKKVNNNQGNKKKNEKKNEKKNDKINDTINDKINHKINHKKNDKINHKKNDKINHKKNDKINHKKNDKINNKINHKKNMIPNQKPINNMIKYNIKNKKKIYNDTNDHADNRNIHSHIHKKVPNKKDNNINHMYYDNNNNINQPISYIHTAYDNVCHQINNDDHCIPLSCVIKNRKTRRSRKNKNLFNNKKNYTNEP.

Disordered regions lie at residues 29–48 (KGNSENLSTNNNPNLTGKNI), 481–510 (EQKSHLHSNHNINHEKGSDPSYNLNTKNTK), and 680–705 (DKKVNNNQGNKKKNEKKNEKKNDKIN). Over residues 31–44 (NSENLSTNNNPNLT) the composition is skewed to low complexity. Over residues 695–705 (KKNEKKNDKIN) the composition is skewed to basic and acidic residues.

This is an uncharacterized protein from Plasmodium falciparum (isolate 3D7).